A 235-amino-acid polypeptide reads, in one-letter code: Small ribosomal subunit protein uS3 (235 aa).

Residues 39 to 107 form the KH type-2 domain; the sequence is VRSYVKKKLI…PAQVNISEIR (69 aa).

It belongs to the universal ribosomal protein uS3 family. In terms of assembly, part of the 30S ribosomal subunit. Forms a tight complex with proteins S10 and S14.

Binds the lower part of the 30S subunit head. Binds mRNA in the 70S ribosome, positioning it for translation. This is Small ribosomal subunit protein uS3 from Buchnera aphidicola subsp. Cinara cedri (strain Cc).